The primary structure comprises 40 residues: Large ribosomal subunit protein bL36A (40 aa).

The protein belongs to the bacterial ribosomal protein bL36 family.

This chain is Large ribosomal subunit protein bL36A, found in Renibacterium salmoninarum (strain ATCC 33209 / DSM 20767 / JCM 11484 / NBRC 15589 / NCIMB 2235).